A 308-amino-acid polypeptide reads, in one-letter code: tRNA pseudouridine synthase B (308 aa).

Catalysis depends on D47, which acts as the Nucleophile.

The protein belongs to the pseudouridine synthase TruB family. Type 1 subfamily.

The catalysed reaction is uridine(55) in tRNA = pseudouridine(55) in tRNA. Responsible for synthesis of pseudouridine from uracil-55 in the psi GC loop of transfer RNAs. The sequence is that of tRNA pseudouridine synthase B from Xanthomonas axonopodis pv. citri (strain 306).